Here is a 149-residue protein sequence, read N- to C-terminus: Sex-regulated protein janus-A (149 aa).

K46 is a binding site for substrate. Catalysis depends on H77, which acts as the Proton acceptor. A substrate-binding site is contributed by 118-120 (STG).

Belongs to the janus family.

JanA and janB regulate somatic sex differentiation. This chain is Sex-regulated protein janus-A (janA), found in Drosophila pseudoobscura pseudoobscura (Fruit fly).